A 712-amino-acid polypeptide reads, in one-letter code: Phosphomethylpyrimidine synthase (712 aa).

Residues 14-49 (AIDITAPESTIPNKSKVPNKSAESSQSTVPKAPSRR) are disordered. Polar residues predominate over residues 20–42 (PESTIPNKSKVPNKSAESSQSTV). Residues Asn-283, Met-312, Tyr-341, His-377, 397-399 (SRG), 438-441 (DGMR), and Glu-477 each bind substrate. His-481 serves as a coordination point for Zn(2+). Tyr-504 contacts substrate. Residue His-545 coordinates Zn(2+). [4Fe-4S] cluster-binding residues include Cys-625, Cys-628, and Cys-633.

This sequence belongs to the ThiC family. Homodimer. Requires [4Fe-4S] cluster as cofactor.

The catalysed reaction is 5-amino-1-(5-phospho-beta-D-ribosyl)imidazole + S-adenosyl-L-methionine = 4-amino-2-methyl-5-(phosphooxymethyl)pyrimidine + CO + 5'-deoxyadenosine + formate + L-methionine + 3 H(+). It functions in the pathway cofactor biosynthesis; thiamine diphosphate biosynthesis. Catalyzes the synthesis of the hydroxymethylpyrimidine phosphate (HMP-P) moiety of thiamine from aminoimidazole ribotide (AIR) in a radical S-adenosyl-L-methionine (SAM)-dependent reaction. The protein is Phosphomethylpyrimidine synthase of Shewanella putrefaciens (strain CN-32 / ATCC BAA-453).